Consider the following 373-residue polypeptide: UDP-N-acetylglucosamine--N-acetylmuramyl-(pentapeptide) pyrophosphoryl-undecaprenol N-acetylglucosamine transferase (373 aa).

Residues 16–18, Asn128, Arg164, Ser192, Ile250, and Gln295 each bind UDP-N-acetyl-alpha-D-glucosamine; that span reads TGG.

This sequence belongs to the glycosyltransferase 28 family. MurG subfamily.

The protein resides in the cell inner membrane. It carries out the reaction di-trans,octa-cis-undecaprenyl diphospho-N-acetyl-alpha-D-muramoyl-L-alanyl-D-glutamyl-meso-2,6-diaminopimeloyl-D-alanyl-D-alanine + UDP-N-acetyl-alpha-D-glucosamine = di-trans,octa-cis-undecaprenyl diphospho-[N-acetyl-alpha-D-glucosaminyl-(1-&gt;4)]-N-acetyl-alpha-D-muramoyl-L-alanyl-D-glutamyl-meso-2,6-diaminopimeloyl-D-alanyl-D-alanine + UDP + H(+). Its pathway is cell wall biogenesis; peptidoglycan biosynthesis. Cell wall formation. Catalyzes the transfer of a GlcNAc subunit on undecaprenyl-pyrophosphoryl-MurNAc-pentapeptide (lipid intermediate I) to form undecaprenyl-pyrophosphoryl-MurNAc-(pentapeptide)GlcNAc (lipid intermediate II). The protein is UDP-N-acetylglucosamine--N-acetylmuramyl-(pentapeptide) pyrophosphoryl-undecaprenol N-acetylglucosamine transferase of Paraburkholderia phymatum (strain DSM 17167 / CIP 108236 / LMG 21445 / STM815) (Burkholderia phymatum).